The sequence spans 397 residues: DNA replication and repair protein RecF (397 aa).

30 to 37 (GPNGQGKT) contacts ATP.

This sequence belongs to the RecF family.

It is found in the cytoplasm. In terms of biological role, the RecF protein is involved in DNA metabolism; it is required for DNA replication and normal SOS inducibility. RecF binds preferentially to single-stranded, linear DNA. It also seems to bind ATP. The sequence is that of DNA replication and repair protein RecF from Beutenbergia cavernae (strain ATCC BAA-8 / DSM 12333 / CCUG 43141 / JCM 11478 / NBRC 16432 / NCIMB 13614 / HKI 0122).